Reading from the N-terminus, the 161-residue chain is Anaerobic nitrite reductase Hb2 (161 aa).

A Globin domain is found at 8 to 157; it reads GFSEEQEALV…LVDAIKSEMK (150 aa). A Homodimerization motif is present at residues 41–45; that stretch reads EIAPS. 6 residues coordinate heme b: Ser51, Lys65, His69, Lys99, Thr103, and His104. Positions 111 to 123 match the Homodimerization motif; that stretch reads NEHFEVTKFALLE.

This sequence belongs to the plant globin family. As to quaternary structure, homodimer. It depends on heme b as a cofactor. In terms of tissue distribution, predominantly expressed in roots, cotyledons, stems and nodules (confined to some cells associated with the nitrogen-fixing Bradyrhizobium symbiont), and, to a lower extent, in flowers, young leaves, pods and seeds.

The protein localises to the cytoplasm. Its subcellular location is the nucleus. The enzyme catalyses Fe(III)-heme b-[protein] + nitric oxide + H2O = Fe(II)-heme b-[protein] + nitrite + 2 H(+). In terms of biological role, phytoglobin that reduces nitrite to nitric oxide (NO) under anoxic conditions (e.g. during flooding or in waterlogged soil) and upon root nodulation. Required for general plant development and during nodulation, especially for the onset of symbiosis. Monitors nitric oxide (NO) levels during early phase of the nitrogen-fixing symbiosis and buffers oxygen in functioning nodules. May not function as an oxygen storage or transport protein. Has an unusually high affinity for O(2) through a hexacoordinate heme iron because of a very low dissociation constant. Involved in water stress tolerance. The chain is Anaerobic nitrite reductase Hb2 from Glycine max (Soybean).